Consider the following 393-residue polypeptide: Elongation factor Tu (393 aa).

In terms of domain architecture, tr-type G spans 6 to 204 (KPHINVGTIG…ALEKIELPVR (199 aa)). Residues 15 to 22 (GHVDHGKT) form a G1 region. GTP is bound at residue 15 to 22 (GHVDHGKT). Thr-22 contributes to the Mg(2+) binding site. The tract at residues 58–62 (GITIS) is G2. The G3 stretch occupies residues 79–82 (DCPG). Residues 79-83 (DCPGH) and 134-137 (NKCD) each bind GTP. Residues 134-137 (NKCD) form a G4 region. The tract at residues 172–174 (SAV) is G5.

It belongs to the TRAFAC class translation factor GTPase superfamily. Classic translation factor GTPase family. EF-Tu/EF-1A subfamily. In terms of assembly, monomer.

The protein resides in the cytoplasm. The enzyme catalyses GTP + H2O = GDP + phosphate + H(+). In terms of biological role, GTP hydrolase that promotes the GTP-dependent binding of aminoacyl-tRNA to the A-site of ribosomes during protein biosynthesis. The protein is Elongation factor Tu of Anaplasma marginale (strain St. Maries).